We begin with the raw amino-acid sequence, 222 residues long: Type II restriction enzyme MjaI (222 aa).

It carries out the reaction Endonucleolytic cleavage of DNA to give specific double-stranded fragments with terminal 5'-phosphates.. Its function is as follows. A P subtype restriction enzyme that recognizes the double-stranded sequence 5'-CTAG-3'; the cleavage site is unknown. The sequence is that of Type II restriction enzyme MjaI (mjaIR) from Methanocaldococcus jannaschii (strain ATCC 43067 / DSM 2661 / JAL-1 / JCM 10045 / NBRC 100440) (Methanococcus jannaschii).